A 385-amino-acid chain; its full sequence is Putative type I restriction enzyme specificity subunit S.HindORF215P (385 aa).

The protein belongs to the type-I restriction system S methylase family.

A putative specificity subunit for a type I restriction enzyme; the corresponding endonuclease and methylase subunits have multiple frameshifts and are probably not expressed. This Haemophilus influenzae (strain ATCC 51907 / DSM 11121 / KW20 / Rd) protein is Putative type I restriction enzyme specificity subunit S.HindORF215P.